A 321-amino-acid chain; its full sequence is MTKYALVGDVGGTNARLALCDIASGEISQAKTYSGLDYPSLEAVIRVYLEEHKVEVKDGCIAIACPITGDWVAMTNHTWAFSIAEMKKNLGFSYLEIINDFTAVSMAIPMLKKEHLIQFGGAEPVEGKPIAVYGAGTGLGVAHLVHVDKRWVSLPGEGGHVDFAPNSEEEGIILEILRAEIGHVSAERVLSGPGLVNLYRAIVKADNRLPENLKPKDITERALADSCTDCRRALSLFCVIMGRFGGNLALNLGTFGGVFIAGGIVPRFLEFFKASGFRAAFEDKGRFKEYVHDIPVYLIVHDNPGLLGSGAHLRQTLGHIL.

8–13 contacts ATP; it reads GDVGGT.

Belongs to the bacterial glucokinase family.

The protein resides in the cytoplasm. The catalysed reaction is D-glucose + ATP = D-glucose 6-phosphate + ADP + H(+). This chain is Glucokinase, found in Escherichia coli (strain SMS-3-5 / SECEC).